A 316-amino-acid chain; its full sequence is Ribose-phosphate pyrophosphokinase (316 aa).

Residues 39–41 (DGE) and 98–99 (RQ) each bind ATP. The Mg(2+) site is built by H133 and D172. K195 is a catalytic residue. D-ribose 5-phosphate-binding positions include R197, D221, and 225-229 (DTGGT).

Belongs to the ribose-phosphate pyrophosphokinase family. Class I subfamily. As to quaternary structure, homohexamer. The cofactor is Mg(2+).

It is found in the cytoplasm. It carries out the reaction D-ribose 5-phosphate + ATP = 5-phospho-alpha-D-ribose 1-diphosphate + AMP + H(+). Its pathway is metabolic intermediate biosynthesis; 5-phospho-alpha-D-ribose 1-diphosphate biosynthesis; 5-phospho-alpha-D-ribose 1-diphosphate from D-ribose 5-phosphate (route I): step 1/1. In terms of biological role, involved in the biosynthesis of the central metabolite phospho-alpha-D-ribosyl-1-pyrophosphate (PRPP) via the transfer of pyrophosphoryl group from ATP to 1-hydroxyl of ribose-5-phosphate (Rib-5-P). The polypeptide is Ribose-phosphate pyrophosphokinase (Ralstonia nicotianae (strain ATCC BAA-1114 / GMI1000) (Ralstonia solanacearum)).